Consider the following 223-residue polypeptide: Ribonuclease T (223 aa).

Positions 20 to 194 constitute an Exonuclease domain; the sequence is VVIDVETAGF…YDTERTAELF (175 aa). Mg(2+) is bound by residues aspartate 23, glutamate 25, histidine 181, and aspartate 186. Catalysis depends on histidine 181, which acts as the Proton donor/acceptor.

Belongs to the RNase T family. As to quaternary structure, homodimer. Mg(2+) is required as a cofactor.

In terms of biological role, trims short 3' overhangs of a variety of RNA species, leaving a one or two nucleotide 3' overhang. Responsible for the end-turnover of tRNA: specifically removes the terminal AMP residue from uncharged tRNA (tRNA-C-C-A). Also appears to be involved in tRNA biosynthesis. The sequence is that of Ribonuclease T from Shewanella baltica (strain OS155 / ATCC BAA-1091).